The sequence spans 201 residues: 3-isopropylmalate dehydratase small subunit (201 aa).

It belongs to the LeuD family. LeuD type 1 subfamily. Heterodimer of LeuC and LeuD.

The catalysed reaction is (2R,3S)-3-isopropylmalate = (2S)-2-isopropylmalate. It participates in amino-acid biosynthesis; L-leucine biosynthesis; L-leucine from 3-methyl-2-oxobutanoate: step 2/4. Its function is as follows. Catalyzes the isomerization between 2-isopropylmalate and 3-isopropylmalate, via the formation of 2-isopropylmaleate. The polypeptide is 3-isopropylmalate dehydratase small subunit (Paracoccus denitrificans (strain Pd 1222)).